We begin with the raw amino-acid sequence, 241 residues long: Nopaline transport system permease protein NocM (241 aa).

An ABC transmembrane type-1 domain is found at 17-215 (VPTTLTLAFI…FITFVVSRLV (199 aa)). The next 5 membrane-spanning stretches (helical) occupy residues 21–41 (LTLA…VALM), 52–72 (LAYG…MFLI), 95–115 (PWFC…SEII), 161–181 (VMLI…EVTG), and 191–211 (YSPV…TFVV).

Belongs to the binding-protein-dependent transport system permease family. HisMQ subfamily.

The protein resides in the cell inner membrane. In terms of biological role, component of the nopaline active transport system probably consisting of four subunits: Q, M, P and T. This system is also capable of transporting octopine provided that catabolic functions are induced with nopaline. This is Nopaline transport system permease protein NocM (nocM) from Agrobacterium fabrum (strain C58 / ATCC 33970) (Agrobacterium tumefaciens (strain C58)).